The following is a 149-amino-acid chain: HMG1/2-like protein (149 aa).

Composition is skewed to basic and acidic residues over residues 1–15 (MKGGKSKGESKKAET) and 35–44 (KGKEPKDPNK). Disordered stretches follow at residues 1-52 (MKGG…PSAF) and 112-149 (AYNKKLEGKDDEEGSDKSKSEVNDEDEDEEDEEDEDDD). The HMG box DNA-binding region spans 45 to 114 (PKRPPSAFFV…EYEITLQAYN (70 aa)). Residues 134 to 149 (NDEDEDEEDEEDEDDD) are compositionally biased toward acidic residues.

The protein belongs to the HMGB family.

The protein localises to the nucleus. This chain is HMG1/2-like protein, found in Vicia faba (Broad bean).